The sequence spans 423 residues: MIDLKALRENPDVGRASQRSRGEDPELVDRLLDADARHRALLTSFEQQRAEQKELSRAVGKAAPQDRPAVLAHAKSRAEQVKSAEADADRARAELDALLSRMPNIVADGVPPGGEDDYVVLRHEGTPRDFAAEGFTPRDHLELGERLRAIDTERGAKVSGARFFYLTGLGARLELALLNAAIDKALTAGFTPVITPTLVKPEIMAGTGFLGAHAEEVYRIEKDDLYLVGTSEVALAGYHANEIVDLSDGPLRYAGWSACYRREAGSHGKDTRGIIRVHQFHKVEMFSYARLEDAAVEHERLLAWEEELLRLVELPYRVIDTAAGDLGSSAARKFDCEAWLPTQERYLELTSTSNCTSFQARRLGTRERLEDGSTRPVATLNGTLATTRWIVTILENHQNPDGSVRVPAGLQPYLGGLTELRAS.

A compositionally biased stretch (basic and acidic residues) spans 1-12 (MIDLKALRENPD). The segment at 1 to 26 (MIDLKALRENPDVGRASQRSRGEDPE) is disordered. Position 230-232 (230-232 (TSE)) interacts with L-serine. Residues 261–263 (RRE) and Val277 each bind ATP. Glu284 lines the L-serine pocket. Residue 348–351 (ELTS) participates in ATP binding. Position 383 (Thr383) interacts with L-serine.

It belongs to the class-II aminoacyl-tRNA synthetase family. Type-1 seryl-tRNA synthetase subfamily. Homodimer. The tRNA molecule binds across the dimer.

It localises to the cytoplasm. The enzyme catalyses tRNA(Ser) + L-serine + ATP = L-seryl-tRNA(Ser) + AMP + diphosphate + H(+). It catalyses the reaction tRNA(Sec) + L-serine + ATP = L-seryl-tRNA(Sec) + AMP + diphosphate + H(+). It functions in the pathway aminoacyl-tRNA biosynthesis; selenocysteinyl-tRNA(Sec) biosynthesis; L-seryl-tRNA(Sec) from L-serine and tRNA(Sec): step 1/1. Catalyzes the attachment of serine to tRNA(Ser). Is also able to aminoacylate tRNA(Sec) with serine, to form the misacylated tRNA L-seryl-tRNA(Sec), which will be further converted into selenocysteinyl-tRNA(Sec). This is Serine--tRNA ligase from Beutenbergia cavernae (strain ATCC BAA-8 / DSM 12333 / CCUG 43141 / JCM 11478 / NBRC 16432 / NCIMB 13614 / HKI 0122).